A 491-amino-acid polypeptide reads, in one-letter code: Cobyric acid synthase (491 aa).

A GATase cobBQ-type domain is found at 250-439 (EVTIAVIRLP…LHGIFDNGAW (190 aa)). Residue Cys-331 is the Nucleophile of the active site. The active site involves His-431.

It belongs to the CobB/CobQ family. CobQ subfamily.

Its pathway is cofactor biosynthesis; adenosylcobalamin biosynthesis. Its function is as follows. Catalyzes amidations at positions B, D, E, and G on adenosylcobyrinic A,C-diamide. NH(2) groups are provided by glutamine, and one molecule of ATP is hydrogenolyzed for each amidation. In Synechococcus sp. (strain ATCC 27144 / PCC 6301 / SAUG 1402/1) (Anacystis nidulans), this protein is Cobyric acid synthase.